The sequence spans 509 residues: Transcription factor SOX-9 (509 aa).

Disordered regions lie at residues Met1–Glu66 and Arg160–Arg271. Residues Ser27–Ser41 are compositionally biased toward low complexity. Positions Asp42 to Thr52 are enriched in polar residues. 2 stretches are compositionally biased toward basic and acidic residues: residues Gly56–Glu66 and Arg160–Tyr174. The segment at Glu63 to Pro103 is dimerization (DIM). The segment at Glu63 to Pro103 is PQA. At Ser64 the chain carries Phosphoserine. The segment at residues Val105–Lys173 is a DNA-binding region (HMG box). The residue at position 211 (Ser211) is a Phosphoserine. A transactivation domain (TAM) region spans residues Pro224–Pro307. Short sequence motifs (9aaTAD) lie at residues Ile275–Ser284 and Asp290–Leu298. Disordered stretches follow at residues Trp335–Pro415 and Tyr420–Gln439. The span at Ala341 to Pro359 shows a compositional bias: pro residues. Low complexity predominate over residues Ala360–Gln369. Residues His380 to Pro415 show a composition bias toward polar residues. The transactivation domain (TAC) stretch occupies residues Arg394–Pro509. Lys398 is covalently cross-linked (Glycyl lysine isopeptide (Lys-Gly) (interchain with G-Cter in ubiquitin)). Residues Ser460–Tyr468 carry the 9aaTAD 3 motif. A disordered region spans residues Pro479–Pro509. The segment covering Gly485 to Pro509 has biased composition (polar residues).

As to quaternary structure, homodimer; homodimerization is required for activity. Interacts (via C-terminus) with ZNF219; forming a complex that binds to the COL2A1 promoter and activates COL2A1 expression. Interacts with DDRGK1. Interacts with EP300/p300. Interacts with beta-catenin (CTNNB1); inhibiting CTNNB1 activity by competing with the binding sites of TCF/LEF within CTNNB1. In terms of processing, acetylated; acetylation impairs nuclear localization and ability to transactivate expression of target genes. Deacetylated by SIRT1. Post-translationally, phosphorylation at Ser-64 and Ser-211 by PKA increases transcriptional activity and may help delay chondrocyte maturation downstream of PTHLH/PTHrP signaling. Phosphorylation at either Ser-64 or Ser-211 is required for sumoylation, but phosphorylation is not dependent on sumoylation. Phosphorylated on tyrosine residues; tyrosine dephosphorylation by PTPN11/SHP2 blocks SOX9 phosphorylation by PKA and subsequent SUMOylation. Sumoylated; phosphorylation at either Ser-64 or Ser-211 is required for sumoylation. Sumoylation is induced by BMP signaling pathway. In terms of processing, ubiquitinated; ubiquitination leads to proteasomal degradation and is negatively regulated by DDRGK1.

It is found in the nucleus. Functionally, transcription factor that plays a key role in chondrocytes differentiation and skeletal development. Specifically binds the 5'-ACAAAG-3' DNA motif present in enhancers and super-enhancers and promotes expression of genes important for chondrogenesis, including cartilage matrix protein-coding genes COL2A1, COL4A2, COL9A1, COL11A2 and ACAN, SOX5 and SOX6. Also binds to some promoter regions. Plays a central role in successive steps of chondrocyte differentiation. Absolutely required for precartilaginous condensation, the first step in chondrogenesis during which skeletal progenitors differentiate into prechondrocytes. Together with SOX5 and SOX6, required for overt chondrogenesis when condensed prechondrocytes differentiate into early stage chondrocytes, the second step in chondrogenesis. Later, required to direct hypertrophic maturation and block osteoblast differentiation of growth plate chondrocytes: maintains chondrocyte columnar proliferation, delays prehypertrophy and then prevents osteoblastic differentiation of chondrocytes by lowering beta-catenin (CTNNB1) signaling and RUNX2 expression. Also required for chondrocyte hypertrophy, both indirectly, by keeping the lineage fate of chondrocytes, and directly, by remaining present in upper hypertrophic cells and transactivating COL10A1 along with MEF2C. Low lipid levels are the main nutritional determinant for chondrogenic commitment of skeletal progenitor cells: when lipids levels are low, FOXO (FOXO1 and FOXO3) transcription factors promote expression of SOX9, which induces chondrogenic commitment and suppresses fatty acid oxidation. Mechanistically, helps, but is not required, to remove epigenetic signatures of transcriptional repression and deposit active promoter and enhancer marks at chondrocyte-specific genes. Acts in cooperation with the Hedgehog pathway-dependent GLI (GLI1 and GLI3) transcription factors. In addition to cartilage development, also acts as a regulator of proliferation and differentiation in epithelial stem/progenitor cells: involved in the lung epithelium during branching morphogenesis, by balancing proliferation and differentiation and regulating the extracellular matrix. Controls epithelial branching during kidney development. The chain is Transcription factor SOX-9 (SOX9) from Sus scrofa (Pig).